The following is a 190-amino-acid chain: Protein LZIC (190 aa).

A coiled-coil region spans residues 2 to 63; the sequence is ASRGKTETSK…SEFNDSLKKI (62 aa).

The protein belongs to the CTNNBIP1 family. In terms of assembly, does not interact with CTNNB1. As to expression, ubiquitously expressed, with highest levels in kidney. Up-regulated in several cases of gastric cancers.

This chain is Protein LZIC (LZIC), found in Homo sapiens (Human).